The chain runs to 350 residues: MDHTASLSPVRPEAQPTDDRERALRPRLLKDFLGQEKTKRNLRLFIQAARDRNESLDHLFLIGPPGLGKTTLAHITACELGVECKVTGAPALDKPKDLAGILTALSERSVFFVDEIHRLKPAIEEMLYIAMEDYELDWVIGQGPSARTVRIPLPPFTLIGATTRAGMVSSPLISRFGIVERFEFYTPEELAAIVQRSARLLDITLDARAALALARCSRGTPRVANRLLRRIRDFAQVAGSAHISETIVRAGLAHLKIDELGLELHDIQLLRVMIEHFGGGPVGAETLAISLGESPETLEDYYEPYLIQIGLMQRTPRGRMATARAYAHLGLPVPEARTLTPHSPEQGTLL.

The segment at 1–22 (MDHTASLSPVRPEAQPTDDRER) is disordered. The segment at 1–185 (MDHTASLSPV…FGIVERFEFY (185 aa)) is large ATPase domain (RuvB-L). ATP is bound by residues Leu24, Arg25, Gly66, Lys69, Thr70, Thr71, 132 to 134 (EDY), Arg175, Tyr185, and Arg222. Thr70 is a Mg(2+) binding site. A small ATPAse domain (RuvB-S) region spans residues 186-256 (TPEELAAIVQ…IVRAGLAHLK (71 aa)). Residues 259–350 (ELGLELHDIQ…PHSPEQGTLL (92 aa)) form a head domain (RuvB-H) region. Residues Arg314 and Arg319 each contribute to the DNA site.

The protein belongs to the RuvB family. In terms of assembly, homohexamer. Forms an RuvA(8)-RuvB(12)-Holliday junction (HJ) complex. HJ DNA is sandwiched between 2 RuvA tetramers; dsDNA enters through RuvA and exits via RuvB. An RuvB hexamer assembles on each DNA strand where it exits the tetramer. Each RuvB hexamer is contacted by two RuvA subunits (via domain III) on 2 adjacent RuvB subunits; this complex drives branch migration. In the full resolvosome a probable DNA-RuvA(4)-RuvB(12)-RuvC(2) complex forms which resolves the HJ.

Its subcellular location is the cytoplasm. It catalyses the reaction ATP + H2O = ADP + phosphate + H(+). Functionally, the RuvA-RuvB-RuvC complex processes Holliday junction (HJ) DNA during genetic recombination and DNA repair, while the RuvA-RuvB complex plays an important role in the rescue of blocked DNA replication forks via replication fork reversal (RFR). RuvA specifically binds to HJ cruciform DNA, conferring on it an open structure. The RuvB hexamer acts as an ATP-dependent pump, pulling dsDNA into and through the RuvAB complex. RuvB forms 2 homohexamers on either side of HJ DNA bound by 1 or 2 RuvA tetramers; 4 subunits per hexamer contact DNA at a time. Coordinated motions by a converter formed by DNA-disengaged RuvB subunits stimulates ATP hydrolysis and nucleotide exchange. Immobilization of the converter enables RuvB to convert the ATP-contained energy into a lever motion, pulling 2 nucleotides of DNA out of the RuvA tetramer per ATP hydrolyzed, thus driving DNA branch migration. The RuvB motors rotate together with the DNA substrate, which together with the progressing nucleotide cycle form the mechanistic basis for DNA recombination by continuous HJ branch migration. Branch migration allows RuvC to scan DNA until it finds its consensus sequence, where it cleaves and resolves cruciform DNA. This is Holliday junction branch migration complex subunit RuvB from Treponema pallidum (strain Nichols).